The primary structure comprises 522 residues: Pectinesterase/pectinesterase inhibitor PPE8B (522 aa).

The signal sequence occupies residues 1-30 (MPYLLMASHNPLPAGKQLLLLVLLCAFFSS). A pectinesterase inhibitor PPE8B region spans residues 31–174 (SFIPFASCSI…TSLVQELLTQ (144 aa)). N-linked (GlcNAc...) asparagine glycans are attached at residues Asn-105, Asn-118, Asn-119, Asn-218, Asn-221, and Asn-274. The interval 208-506 (DAIVAQDGTG…YTVAQFIEGN (299 aa)) is pectinesterase PPE8B. The substrate site is built by Thr-283 and Gln-313. Asp-336 serves as the catalytic Proton donor; for pectinesterase activity. Cys-350 and Cys-370 are oxidised to a cystine. The Nucleophile; for pectinesterase activity role is filled by Asp-357. The N-linked (GlcNAc...) asparagine glycan is linked to Asn-405. Residues Arg-426 and Trp-428 each contribute to the substrate site. Residues Asn-489 and Asn-496 are each glycosylated (N-linked (GlcNAc...) asparagine).

In the N-terminal section; belongs to the PMEI family. The protein in the C-terminal section; belongs to the pectinesterase family.

The protein localises to the secreted. Its subcellular location is the cell wall. The enzyme catalyses [(1-&gt;4)-alpha-D-galacturonosyl methyl ester](n) + n H2O = [(1-&gt;4)-alpha-D-galacturonosyl](n) + n methanol + n H(+). The protein operates within glycan metabolism; pectin degradation; 2-dehydro-3-deoxy-D-gluconate from pectin: step 1/5. In terms of biological role, may have roles in the deposition of pectin in developing tissues and in the wall loosening and cell separation that occurs in cell expansion, fruit ripening and abscission. The protein is Pectinesterase/pectinesterase inhibitor PPE8B of Prunus persica (Peach).